A 115-amino-acid chain; its full sequence is Large ribosomal subunit protein bL19 (115 aa).

Belongs to the bacterial ribosomal protein bL19 family.

In terms of biological role, this protein is located at the 30S-50S ribosomal subunit interface and may play a role in the structure and function of the aminoacyl-tRNA binding site. This is Large ribosomal subunit protein bL19 from Buchnera aphidicola subsp. Cinara cedri (strain Cc).